A 134-amino-acid polypeptide reads, in one-letter code: Cytochrome b5 (134 aa).

A2 carries the post-translational modification N-acetylalanine. N6-acetyllysine is present on residues K7, K10, and K19. Residues V9–H85 enclose the Cytochrome b5 heme-binding domain. H44 and H68 together coordinate heme. Residues W109–M131 traverse the membrane as a helical segment.

It belongs to the cytochrome b5 family.

It localises to the endoplasmic reticulum membrane. The protein resides in the microsome membrane. Cytochrome b5 is a membrane-bound hemoprotein functioning as an electron carrier for several membrane-bound oxygenases. It is also involved in several steps of the sterol biosynthesis pathway, particularly in the C-6 double bond introduction during the C-6 desaturation. The chain is Cytochrome b5 (Cyb5a) from Rattus norvegicus (Rat).